Here is a 433-residue protein sequence, read N- to C-terminus: Probable imidazolonepropionase (433 aa).

4-imidazolone-5-propanoate-binding residues include Tyr-160 and His-193. An N-formimidoyl-L-glutamate-binding site is contributed by Tyr-160. A Fe(3+)-binding site is contributed by His-261. His-261 serves as a coordination point for Zn(2+). Glu-264 is a binding site for 4-imidazolone-5-propanoate. Asp-335 contributes to the Fe(3+) binding site. Asp-335 serves as a coordination point for Zn(2+). Asn-337 contacts N-formimidoyl-L-glutamate.

Belongs to the metallo-dependent hydrolases superfamily. HutI family. It depends on Zn(2+) as a cofactor. The cofactor is Fe(3+).

The enzyme catalyses 4-imidazolone-5-propanoate + H2O = N-formimidoyl-L-glutamate. The protein operates within amino-acid degradation; L-histidine degradation into L-glutamate; N-formimidoyl-L-glutamate from L-histidine: step 3/3. This chain is Probable imidazolonepropionase (amdhd1), found in Danio rerio (Zebrafish).